The following is a 302-amino-acid chain: uncharacterized protein (302 aa).

Residue E48 is part of the active site.

This sequence belongs to the PhzF family.

This is an uncharacterized protein from Clostridium acetobutylicum (strain ATCC 824 / DSM 792 / JCM 1419 / IAM 19013 / LMG 5710 / NBRC 13948 / NRRL B-527 / VKM B-1787 / 2291 / W).